Consider the following 332-residue polypeptide: PRKC apoptosis WT1 regulator protein (332 aa).

Polar residues-rich tracts occupy residues 1–14 (MATGGYRSSGSTTD) and 52–62 (AQTTAAGTSEL). The segment at 1–253 (MATGGYRSSG…HNRDTSAPAN (253 aa)) is disordered. The B30.2/SPRY domain-binding motif signature appears at 61-65 (ELNHG). Residues 65–79 (GPAGAAAPAAPGPGA) show a composition bias toward low complexity. Positions 137-153 (RKGKGQIEKRKLREKRR) match the Nuclear localization signal motif. The segment at 137–195 (RKGKGQIEKRKLREKRRSTGVVNIPAAECLDEYEDDEAGQKERKREDAITQQNTIQNEA) is selective for apoptosis induction in cancer cells (SAC). Threonine 155 carries the phosphothreonine; by PKA modification. Positions 174-184 (AGQKERKREDA) are enriched in basic and acidic residues. Residues 176 to 198 (QKERKREDAITQQNTIQNEAASL) adopt a coiled-coil conformation. Residues 185 to 195 (ITQQNTIQNEA) show a composition bias toward polar residues. The residue at position 223 (serine 223) is a Phosphoserine. Over residues 234-247 (PRTDRSGFSRHNRD) the composition is skewed to basic and acidic residues. Positions 292–332 (IGKLKEEIDLLNRDLDDMEDENEQLKQENKTLLKVVGQLTR) are leucine-zipper.

In terms of assembly, homooligomer. Interacts (via the C-terminal region) with WT1. Interacts with THAP1. Interacts with AATF. Interacts with BACE1. Interacts with SPSB1 (via B30.2/SPRY domain); this interaction is direct and occurs in association with the Elongin BC complex. Interacts with SPSB2 (via B30.2/SPRY domain); this interaction occurs in association with the Elongin BC complex. Interacts with SPSB4 (via B30.2/SPRY domain); this interaction occurs in association with the Elongin BC complex. Component of a ternary complex composed of SQSTM1 and PRKCZ. Interacts with actin. Preferentially phosphorylated at the Thr-155 by PKC in cancer cells.

It localises to the cytoplasm. The protein resides in the nucleus. Pro-apoptotic protein capable of selectively inducing apoptosis in cancer cells, sensitizing the cells to diverse apoptotic stimuli and causing regression of tumors in animal models. Induces apoptosis in certain cancer cells by activation of the Fas prodeath pathway and coparallel inhibition of NF-kappa-B transcriptional activity. Inhibits the transcriptional activation and augments the transcriptional repression mediated by WT1. Down-regulates the anti-apoptotic protein BCL2 via its interaction with WT1. Also seems to be a transcriptional repressor by itself. May be directly involved in regulating the amyloid precursor protein (APP) cleavage activity of BACE1. This is PRKC apoptosis WT1 regulator protein (Pawr) from Rattus norvegicus (Rat).